We begin with the raw amino-acid sequence, 769 residues long: Transferrin receptor protein 1 (769 aa).

The Cytoplasmic segment spans residues 1 to 70 (MMDQARSAFS…KPKRFNGFIC (70 aa)). A mediates interaction with SH3BP4 region spans residues 1–70 (MMDQARSAFS…KPKRFNGFIC (70 aa)). Residues serine 10 and serine 19 each carry the phosphoserine modification. Tyrosine 20 carries the post-translational modification Phosphotyrosine. Residues 20–23 (YTRF) carry the Endocytosis signal motif. A Phosphothreonine modification is found at threonine 21. Residue serine 24 is modified to Phosphoserine. Positions 61-64 (KPKR) match the Stop-transfer sequence motif. Cysteine 70 carries the S-palmitoyl cysteine lipid modification. Residues 71–91 (YGTIAIILFFLIGFMIGYLGY) traverse the membrane as a helical; Signal-anchor for type II membrane protein segment. At 92–769 (CKRVEAKSEC…GDIWDIDNEF (678 aa)) the chain is on the extracellular side. O-linked (GalNAc...) threonine glycosylation is present at threonine 107. The region spanning 232-322 (SKAATVTGRL…GTGDPYTPGF (91 aa)) is the PA domain. 2 N-linked (GlcNAc...) asparagine glycosylation sites follow: asparagine 260 and asparagine 326. The interval 578-769 (TMDVYEKLIQ…GDIWDIDNEF (192 aa)) is ligand-binding. The short motif at 655-657 (RGD) is the Cell attachment site element. Asparagine 731 and asparagine 736 each carry an N-linked (GlcNAc...) asparagine glycan.

The protein belongs to the peptidase M28 family. M28B subfamily. As to quaternary structure, homodimer; disulfide-linked. Binds one transferrin molecule per subunit. Interacts with SH3BP4. Homodimer; disulfide-linked. Binds one transferrin or HFE molecule per subunit. Binds the HLA class II histocompatibility antigen, DR1. Interacts with SH3BP3. Interacts with STEAP3; facilitates TFRC endocytosis in erythroid precursor cells. In terms of processing, stearoylated by ZDHHC6 which inhibits TFRC-mediated activation of the JNK pathway and promotes mitochondrial fragmentation. Stearoylation does not affect iron uptake. N- and O-glycosylated, phosphorylated and palmitoylated.

It is found in the cell membrane. The protein localises to the melanosome. Cellular uptake of iron occurs via receptor-mediated endocytosis of ligand-occupied transferrin receptor into specialized endosomes. Endosomal acidification leads to iron release. The apotransferrin-receptor complex is then recycled to the cell surface with a return to neutral pH and the concomitant loss of affinity of apotransferrin for its receptor. Transferrin receptor is necessary for development of erythrocytes and the nervous system. Positively regulates T and B cell proliferation through iron uptake. Acts as a lipid sensor that regulates mitochondrial fusion by regulating activation of the JNK pathway. When dietary levels of stearate (C18:0) are low, promotes activation of the JNK pathway, resulting in HUWE1-mediated ubiquitination and subsequent degradation of the mitofusin MFN2 and inhibition of mitochondrial fusion. When dietary levels of stearate (C18:0) are high, TFRC stearoylation inhibits activation of the JNK pathway and thus degradation of the mitofusin MFN2. Mediates uptake of NICOL1 into fibroblasts where it may regulate extracellular matrix production. This chain is Transferrin receptor protein 1 (TFRC), found in Felis catus (Cat).